The chain runs to 635 residues: Surface protein F (635 aa).

An N-terminal signal peptide occupies residues 1–37 (MAKYRGKPFQLYVKLSCSTMMATSIILTNILPYDAQA). Basic and acidic residues-rich tracts occupy residues 101-112 (NELDSKDNKSSH) and 193-202 (KSKDASKDTS). Disordered regions lie at residues 101–122 (NELD…SDID) and 192–228 (HKSK…SGHV). The short motif at 597–601 (LPKAG) is the LPXTG sorting signal element. Position 600 is a pentaglycyl murein peptidoglycan amidated alanine (alanine 600). A propeptide spans 601–635 (GETIKEHWLPISVIVGAMGVLMIWLSRRNKLKNKA) (removed by sortase).

The protein resides in the secreted. The protein localises to the cell wall. In Staphylococcus aureus (strain NCTC 8325 / PS 47), this protein is Surface protein F.